The primary structure comprises 202 residues: Methylthioribulose-1-phosphate dehydratase (202 aa).

Zn(2+) is bound by residues histidine 93 and histidine 95.

This sequence belongs to the aldolase class II family. MtnB subfamily. Requires Zn(2+) as cofactor.

The enzyme catalyses 5-(methylsulfanyl)-D-ribulose 1-phosphate = 5-methylsulfanyl-2,3-dioxopentyl phosphate + H2O. The protein operates within amino-acid biosynthesis; L-methionine biosynthesis via salvage pathway; L-methionine from S-methyl-5-thio-alpha-D-ribose 1-phosphate: step 2/6. In terms of biological role, catalyzes the dehydration of methylthioribulose-1-phosphate (MTRu-1-P) into 2,3-diketo-5-methylthiopentyl-1-phosphate (DK-MTP-1-P). In Klebsiella pneumoniae subsp. pneumoniae (strain ATCC 700721 / MGH 78578), this protein is Methylthioribulose-1-phosphate dehydratase.